Here is a 692-residue protein sequence, read N- to C-terminus: Elongation factor G (692 aa).

The tr-type G domain maps to 8–282 (ENTRNIGIMA…GVVDYLPSPL (275 aa)). Residues 17 to 24 (AHIDAGKT), 81 to 85 (DTPGH), and 135 to 138 (NKMD) contribute to the GTP site.

Belongs to the TRAFAC class translation factor GTPase superfamily. Classic translation factor GTPase family. EF-G/EF-2 subfamily.

It is found in the cytoplasm. Catalyzes the GTP-dependent ribosomal translocation step during translation elongation. During this step, the ribosome changes from the pre-translocational (PRE) to the post-translocational (POST) state as the newly formed A-site-bound peptidyl-tRNA and P-site-bound deacylated tRNA move to the P and E sites, respectively. Catalyzes the coordinated movement of the two tRNA molecules, the mRNA and conformational changes in the ribosome. In Geobacillus thermodenitrificans (strain NG80-2), this protein is Elongation factor G.